The sequence spans 331 residues: UBX domain-containing protein 2B (331 aa).

Disordered stretches follow at residues 1–26 (MAEG…SARD) and 38–63 (EMKC…PPLR). A2 bears the N-acetylalanine mark. Positions 38 to 48 (EMKCKSSKPDR) are enriched in basic and acidic residues. S56 carries the post-translational modification Phosphoserine. T59 carries the phosphothreonine modification. At S66 the chain carries Phosphoserine. Positions 141–206 (DVQILLRLWS…MEDHQDQEYI (66 aa)) constitute an SEP domain. Phosphoserine occurs at positions 231, 234, and 235. In terms of domain architecture, UBX spans 252–329 (DSVPTTKIQI…DILNTVILQQ (78 aa)).

It belongs to the NSFL1C family. As to quaternary structure, interacts with VCP. Does not bind ubiquitin. As to expression, present at high level in brain. Also present in liver, kidney, spleen, testis, lung and heart (at protein level).

The protein localises to the nucleus. It is found in the cytoplasm. Its subcellular location is the cytosol. The protein resides in the endoplasmic reticulum. It localises to the golgi apparatus. The protein localises to the cytoskeleton. It is found in the microtubule organizing center. Its subcellular location is the centrosome. Functionally, adapter protein required for Golgi and endoplasmic reticulum biogenesis. Involved in Golgi and endoplasmic reticulum maintenance during interphase and in their reassembly at the end of mitosis. The complex formed with VCP has membrane fusion activity; membrane fusion activity requires USO1-GOLGA2 tethering and BET1L. VCPIP1 is also required, but not its deubiquitinating activity. Together with NSFL1C/p47, regulates the centrosomal levels of kinase AURKA/Aurora A during mitotic progression by promoting AURKA removal from centrosomes in prophase. Also, regulates spindle orientation during mitosis. This Rattus norvegicus (Rat) protein is UBX domain-containing protein 2B (Ubxn2b).